Here is a 96-residue protein sequence, read N- to C-terminus: Transcriptional regulator ATRY (96 aa).

The GATA-type; atypical zinc-finger motif lies at 1 to 12; sequence VICTACGQQVNQ. The region spanning 1-96 is the ADD domain; that stretch reads VICTACGQQV…IAVCDSVLEN (96 aa). The segment at 27–82 adopts a PHD-type; atypical zinc-finger fold; it reads LICKRWCAEGGNLICCDSCHNAFCKKCIWRNLGRKEISKIMNEKNEWHCYICCPEP.

This sequence belongs to the SNF2/RAD54 helicase family. As to expression, expressed in developing and adult testis. Also weakly expressed in prostate and epididymis.

Its subcellular location is the nucleus. The catalysed reaction is ATP + H2O = ADP + phosphate + H(+). Could be a global transcriptional regulator. Modifies gene expression by affecting chromatin. This is Transcriptional regulator ATRY (ATRY) from Notamacropus eugenii (Tammar wallaby).